The following is a 1170-amino-acid chain: Error-prone DNA polymerase (1170 aa).

2 disordered regions span residues 867–899 (RGAR…LHND) and 1129–1170 (IPHG…RDFH). Positions 886 to 899 (PRNDNDRQIPLHND) are enriched in basic and acidic residues.

Belongs to the DNA polymerase type-C family. DnaE2 subfamily.

Its subcellular location is the cytoplasm. The enzyme catalyses DNA(n) + a 2'-deoxyribonucleoside 5'-triphosphate = DNA(n+1) + diphosphate. Functionally, DNA polymerase involved in damage-induced mutagenesis and translesion synthesis (TLS). It is not the major replicative DNA polymerase. The sequence is that of Error-prone DNA polymerase from Bradyrhizobium sp. (strain ORS 278).